Consider the following 446-residue polypeptide: Probable glycine dehydrogenase (decarboxylating) subunit 1 (446 aa).

The protein belongs to the GcvP family. N-terminal subunit subfamily. As to quaternary structure, the glycine cleavage system is composed of four proteins: P, T, L and H. In this organism, the P 'protein' is a heterodimer of two subunits.

It carries out the reaction N(6)-[(R)-lipoyl]-L-lysyl-[glycine-cleavage complex H protein] + glycine + H(+) = N(6)-[(R)-S(8)-aminomethyldihydrolipoyl]-L-lysyl-[glycine-cleavage complex H protein] + CO2. In terms of biological role, the glycine cleavage system catalyzes the degradation of glycine. The P protein binds the alpha-amino group of glycine through its pyridoxal phosphate cofactor; CO(2) is released and the remaining methylamine moiety is then transferred to the lipoamide cofactor of the H protein. In Methylocella silvestris (strain DSM 15510 / CIP 108128 / LMG 27833 / NCIMB 13906 / BL2), this protein is Probable glycine dehydrogenase (decarboxylating) subunit 1.